Here is a 105-residue protein sequence, read N- to C-terminus: Small ribosomal subunit protein bS6 (105 aa).

Belongs to the bacterial ribosomal protein bS6 family.

Its function is as follows. Binds together with bS18 to 16S ribosomal RNA. In Lawsonia intracellularis (strain PHE/MN1-00), this protein is Small ribosomal subunit protein bS6.